The chain runs to 337 residues: Phosphate acyltransferase (337 aa).

The protein belongs to the PlsX family. As to quaternary structure, homodimer. Probably interacts with PlsY.

The protein resides in the cytoplasm. It carries out the reaction a fatty acyl-[ACP] + phosphate = an acyl phosphate + holo-[ACP]. Its pathway is lipid metabolism; phospholipid metabolism. Functionally, catalyzes the reversible formation of acyl-phosphate (acyl-PO(4)) from acyl-[acyl-carrier-protein] (acyl-ACP). This enzyme utilizes acyl-ACP as fatty acyl donor, but not acyl-CoA. The sequence is that of Phosphate acyltransferase from Aquifex aeolicus (strain VF5).